The following is a 445-amino-acid chain: Phosphoglucosamine mutase (445 aa).

Serine 102 (phosphoserine intermediate) is an active-site residue. The Mg(2+) site is built by serine 102, aspartate 241, aspartate 243, and aspartate 245. Residue serine 102 is modified to Phosphoserine.

Belongs to the phosphohexose mutase family. Mg(2+) serves as cofactor. Post-translationally, activated by phosphorylation.

It carries out the reaction alpha-D-glucosamine 1-phosphate = D-glucosamine 6-phosphate. Its function is as follows. Catalyzes the conversion of glucosamine-6-phosphate to glucosamine-1-phosphate. This is Phosphoglucosamine mutase from Escherichia fergusonii (strain ATCC 35469 / DSM 13698 / CCUG 18766 / IAM 14443 / JCM 21226 / LMG 7866 / NBRC 102419 / NCTC 12128 / CDC 0568-73).